Here is a 927-residue protein sequence, read N- to C-terminus: DNA-binding protein RFX6 (927 aa).

2 disordered regions span residues 1-21 (MAKVRELEEAFVQEQPSPQLP) and 81-108 (NFSSEEEDADTQESKTKAADPQLSQKKS). A DNA-binding region (RFX-type winged-helix) is located at residues 123 to 198 (TLQWLEDNYI…YHYYGIGIKE (76 aa)).

This sequence belongs to the RFX family. As to quaternary structure, interacts with RFX3. In the adult pancreas, expression is restricted to the islets where it could be detected in all endocrine lineages.

It localises to the nucleus. Transcription factor required to direct islet cell differentiation during endocrine pancreas development. Specifically required for the differentiation of 4 of the 5 islet cell types and for the production of insulin. Not required for pancreatic PP (polypeptide-producing) cells differentiation. Acts downstream of NEUROG3 and regulates the transcription factors involved in beta-cell maturation and function, thereby restricting the expression of the beta-cell differentiation and specification genes, and thus the beta-cell fate choice. Activates transcription by forming a heterodimer with RFX3 and binding to the X-box in the promoter of target genes. Involved in glucose-stimulated insulin secretion by promoting insulin and L-type calcium channel gene transcription. This is DNA-binding protein RFX6 (Rfx6) from Mus musculus (Mouse).